Reading from the N-terminus, the 642-residue chain is MATAMDWLPWSLLLFSLMCETSAFYVPGVAPINFHQNDPVEIKAVKLTSSRTQLPYEYYSLPFCQPSKITYKAENLGEVLRGDRIVNTPFQVLMNSEKKCEVLCSQSNKPVTLTVEQSRLVAERITEDYYVHLIADNLPVATRLELYSNRDSDDKKKEKDVQFEHGYRLGFTDVNKIYLHNHLSFILYYHREDMEEDQEHTYRVVRFEVIPQSIRLEDLKADEKSSCTLPEGTNSSPQEIDPTKENQLYFTYSVHWEESDIKWASRWDTYLTMSDVQIHWFSIINSVVVVFFLSGILSMIIIRTLRKDIANYNKEDDIEDTMEESGWKLVHGDVFRPPQYPMILSSLLGSGIQLFCMILIVIFVAMLGMLSPSSRGALMTTACFLFMFMGVFGGFSAGRLYRTLKGHRWKKGAFCTATLYPGVVFGICFVLNCFIWGKHSSGAVPFPTMVALLCMWFGISLPLVYLGYYFGFRKQPYDNPVRTNQIPRQIPEQRWYMNRFVGILMAGILPFGAMFIELFFIFSAIWENQFYYLFGFLFLVFIILVVSCSQISIVMVYFQLCAEDYRWWWRNFLVSGGSAFYVLVYAIFYFVNKLDIVEFIPSLLYFGYTALMVLSFWLLTGTIGFYAAYMFVRKIYAAVKID.

The signal sequence occupies residues 1 to 23; it reads MATAMDWLPWSLLLFSLMCETSA. The Extracellular segment spans residues 24 to 281; it reads FYVPGVAPIN…TMSDVQIHWF (258 aa). The helical transmembrane segment at 282–302 threads the bilayer; it reads SIINSVVVVFFLSGILSMIII. The Cytoplasmic segment spans residues 303–346; it reads RTLRKDIANYNKEDDIEDTMEESGWKLVHGDVFRPPQYPMILSS. Tyr312 is subject to Phosphotyrosine. The helical transmembrane segment at 347-367 threads the bilayer; the sequence is LLGSGIQLFCMILIVIFVAML. Topologically, residues 368–376 are extracellular; that stretch reads GMLSPSSRG. The helical transmembrane segment at 377–397 threads the bilayer; it reads ALMTTACFLFMFMGVFGGFSA. Residues 398-416 lie on the Cytoplasmic side of the membrane; the sequence is GRLYRTLKGHRWKKGAFCT. A helical transmembrane segment spans residues 417–437; that stretch reads ATLYPGVVFGICFVLNCFIWG. Residues 438–449 are Extracellular-facing; the sequence is KHSSGAVPFPTM. The chain crosses the membrane as a helical span at residues 450–470; it reads VALLCMWFGISLPLVYLGYYF. The Cytoplasmic segment spans residues 471–501; the sequence is GFRKQPYDNPVRTNQIPRQIPEQRWYMNRFV. The chain crosses the membrane as a helical span at residues 502–522; the sequence is GILMAGILPFGAMFIELFFIF. Residues 523–535 are Extracellular-facing; that stretch reads SAIWENQFYYLFG. Residues 536 to 556 form a helical membrane-spanning segment; the sequence is FLFLVFIILVVSCSQISIVMV. Topologically, residues 557–570 are cytoplasmic; that stretch reads YFQLCAEDYRWWWR. The helical transmembrane segment at 571 to 591 threads the bilayer; that stretch reads NFLVSGGSAFYVLVYAIFYFV. The Extracellular portion of the chain corresponds to 592-598; that stretch reads NKLDIVE. A helical membrane pass occupies residues 599 to 619; it reads FIPSLLYFGYTALMVLSFWLL. Residues 620 to 642 lie on the Cytoplasmic side of the membrane; sequence TGTIGFYAAYMFVRKIYAAVKID.

Belongs to the nonaspanin (TM9SF) (TC 9.A.2) family. Interacts with ATP6V1H in colon cancer cells. Highly expressed in metastatic melanoma cells whereas it is undetectable in primary melanoma cells, healthy skin tissues and peripheral blood lymphocytes. Expressed in CD34(+) hematopoietic progenitor cells and during monocyte and granulocyte differentiation. Overexpressed in acute myeloid leukemia, in particular in those displaying granulocytic differentiation (at protein level).

Its subcellular location is the membrane. The protein localises to the golgi apparatus. It is found in the early endosome. Associates with proteins harboring glycine-rich transmembrane domains and ensures their efficient localization to the cell surface. Regulates the assembly and activity of V-ATPase in colon cancer cells via its interaction with V-type proton ATPase subunit H (ATP6V1H) and contributes to V-ATPase-mediated pH alterations in cancer cells which play an important role in drug resistance and invasiveness of colon cancer cells. Plays an important role in an atypical phagocytic activity of metastatic melanoma cells called cannibalism and is involved in the pH regulation of the intracellular vesicles in tumor cells. This Homo sapiens (Human) protein is Transmembrane 9 superfamily member 4 (TM9SF4).